A 2297-amino-acid polypeptide reads, in one-letter code: Xin actin-binding repeat-containing protein 1 (2297 aa).

Over residues 1-11 (MAEVAKQKKAT) the composition is skewed to basic and acidic residues. Residues 1-28 (MAEVAKQKKATEAVCGDEDFPPPPPPLP) form a disordered region. Xin repeat units lie at residues 104-119 (GEVQSMRWIFENWTLD), 139-154 (GDVKGKSSLFEHSTFD), 169-184 (GDVRTATWLFETQPLD), 208-223 (GDVTGARRLFETKPLD), 248-263 (GDVKKTVKLFQADPCC), 286-301 (SDFKTARWLFETQPLD), 323-338 (GGVDKKKWMFETQPLD), 362-377 (ADVHNKLQLFENQPLS), and 396-411 (GNVGSTLWLFETQPMD). A compositionally biased stretch (basic and acidic residues) spans 433-442 (GEVQDKRMQF). The interval 433–461 (GEVQDKRMQFEKSTAGKTAGDSGNKVQND) is disordered. Xin repeat units follow at residues 464 to 479 (GDVKTFKSLFETLPLN), 494 to 509 (GDVKGHCSLFETTPLY), 532 to 547 (GNVQNYKWMFETRPLD), 570 to 585 (DDTRTAKWMFETQPLD), 605 to 620 (SNVKTCKWLFETKPMD), 638 to 653 (ADVKSHTWLFETQPLD), 677 to 692 (VNVKTVKHLFETEPLD), 715 to 730 (GDVSRVKEIFESKSLG), 747 to 762 (GSVHKFTWLFENQPIG), 779 to 794 (GDVGGKKFIFETLSLD), 818 to 833 (VNVKSNTMLFESQPLY), 856 to 871 (GDVRGARWMFETKPLD), 893 to 908 (GDVKSARWKFETQPLD), and 928 to 943 (KCVQQSRQLFETEQAS). Serine 952 is modified (phosphoserine). Xin repeat units follow at residues 959-974 (GDVRTSTWLFENQPID), 997-1012 (GDVKRCTWLFESQSLD), and 1033-1048 (ADVKSTTWLFETTPLD). Disordered regions lie at residues 1617 to 1680 (PSSH…KDQK), 1866 to 1900 (KENIQEQAKTSNKDELHFTSRDTSSTPNKHEVPSI), 2147 to 2191 (SAAR…PRRK), and 2243 to 2297 (ELSS…TEKH). Low complexity-rich tracts occupy residues 1618–1630 (SSHTQLSSSVSVT) and 1644–1656 (SVSSNADNSKNSS). Composition is skewed to basic and acidic residues over residues 1876-1885 (SNKDELHFTS) and 2151-2162 (KPAESPTDKPKT). The span at 2166–2180 (QSNAGSSSSQNSSAS) shows a compositional bias: low complexity. The segment covering 2259–2278 (GMTSPVLQRSGQSFSSNSLS) has biased composition (polar residues).

It belongs to the Xin family. As to expression, expressed at intercalated disks in the heart (at protein level).

The protein resides in the cell junction. It localises to the adherens junction. The protein localises to the desmosome. Its function is as follows. Positively regulates organization of the outer plexiform layer and Muller glia cells in the retina. May protect actin filaments from depolymerization. May play a role in development of normal skeletal muscle morphology and muscle fiber type composition. In Danio rerio (Zebrafish), this protein is Xin actin-binding repeat-containing protein 1.